The sequence spans 326 residues: Porphobilinogen deaminase (326 aa).

Cys-251 carries the S-(dipyrrolylmethanemethyl)cysteine modification.

The protein belongs to the HMBS family. Requires dipyrromethane as cofactor.

It catalyses the reaction 4 porphobilinogen + H2O = hydroxymethylbilane + 4 NH4(+). It functions in the pathway porphyrin-containing compound metabolism; protoporphyrin-IX biosynthesis; coproporphyrinogen-III from 5-aminolevulinate: step 2/4. In terms of biological role, tetrapolymerization of the monopyrrole PBG into the hydroxymethylbilane pre-uroporphyrinogen in several discrete steps. The sequence is that of Porphobilinogen deaminase (HEM3) from Eremothecium gossypii (strain ATCC 10895 / CBS 109.51 / FGSC 9923 / NRRL Y-1056) (Yeast).